The sequence spans 689 residues: Pyocin-S2 (689 aa).

His-656, His-681, and His-685 together coordinate Zn(2+).

This sequence belongs to the colicin/pyosin nuclease family. In terms of assembly, purified pyocin S2 makes up a complex of the two (large and small) proteins. The large protein, but not the pyocin complex, shows in vitro DNase activity.

Functionally, causes breakdown of chromosomal DNA as well as complete inhibition of lipid synthesis in sensitive cells. The sequence is that of Pyocin-S2 (pys2) from Pseudomonas aeruginosa (strain ATCC 15692 / DSM 22644 / CIP 104116 / JCM 14847 / LMG 12228 / 1C / PRS 101 / PAO1).